The primary structure comprises 154 residues: Probable transcription factor At4g00232 (154 aa).

Residues 1 to 44 (MDKANTNRSKVCGGSGEAKLTGKKRKNVSAKQSKKDAKKENSQM) are disordered.

It belongs to the GeBP family.

The sequence is that of Probable transcription factor At4g00232 from Arabidopsis thaliana (Mouse-ear cress).